The primary structure comprises 742 residues: Phosphoribosylformylglycinamidine synthase subunit PurL (742 aa).

His50 is an active-site residue. Positions 53 and 92 each coordinate ATP. Glu94 lines the Mg(2+) pocket. Substrate-binding positions include 95–98 (SHNH) and Arg117. The Proton acceptor role is filled by His96. Asp118 lines the Mg(2+) pocket. Gln241 contacts substrate. Asp269 serves as a coordination point for Mg(2+). Residue 313–315 (ESQ) coordinates substrate. Positions 494 and 531 each coordinate ATP. Asn532 serves as a coordination point for Mg(2+). Ser534 contributes to the substrate binding site.

Belongs to the FGAMS family. Monomer. Part of the FGAM synthase complex composed of 1 PurL, 1 PurQ and 2 PurS subunits.

The protein localises to the cytoplasm. It carries out the reaction N(2)-formyl-N(1)-(5-phospho-beta-D-ribosyl)glycinamide + L-glutamine + ATP + H2O = 2-formamido-N(1)-(5-O-phospho-beta-D-ribosyl)acetamidine + L-glutamate + ADP + phosphate + H(+). Its pathway is purine metabolism; IMP biosynthesis via de novo pathway; 5-amino-1-(5-phospho-D-ribosyl)imidazole from N(2)-formyl-N(1)-(5-phospho-D-ribosyl)glycinamide: step 1/2. Its function is as follows. Part of the phosphoribosylformylglycinamidine synthase complex involved in the purines biosynthetic pathway. Catalyzes the ATP-dependent conversion of formylglycinamide ribonucleotide (FGAR) and glutamine to yield formylglycinamidine ribonucleotide (FGAM) and glutamate. The FGAM synthase complex is composed of three subunits. PurQ produces an ammonia molecule by converting glutamine to glutamate. PurL transfers the ammonia molecule to FGAR to form FGAM in an ATP-dependent manner. PurS interacts with PurQ and PurL and is thought to assist in the transfer of the ammonia molecule from PurQ to PurL. The polypeptide is Phosphoribosylformylglycinamidine synthase subunit PurL (Sinorhizobium fredii (strain NBRC 101917 / NGR234)).